A 1143-amino-acid chain; its full sequence is Probable ATP-dependent RNA helicase DHX34 (1143 aa).

Disordered regions lie at residues 1 to 24 (MPPP…EEEA) and 75 to 94 (TSRK…PALA). The segment covering 76-85 (SRKEEKDPGQ) has biased composition (basic and acidic residues). Residues 172–332 (LQTLKEHQVV…FSNAPVVQVP (161 aa)) form the Helicase ATP-binding domain. Residue 185–192 (GDTGCGKS) coordinates ATP. The DEAH box signature appears at 279–282 (DEVH). The Helicase C-terminal domain maps to 368–536 (SIDHKYPPEE…SLVLQMKSMS (169 aa)). Residues 701–955 (QAAQVGDSYS…LRARWESALD (255 aa)) are negatively regulates interaction with UPF1. Residues 724 to 766 (LKRQHEEGAGRRRKVLRLQEEQDGGSSDEDRAGPAPPGASDGV) are disordered. 2 positions are modified to phosphoserine: Ser749 and Ser750. The tract at residues 810 to 1143 (PQLAVPDAFN…EVLRHRKQHV (334 aa)) is required for phosphorylation of UPF1. Not required for interaction with UPF1. The tract at residues 957–1143 (QLAHQAQQQL…EVLRHRKQHV (187 aa)) is required for the interaction with SMG1 and subsequent phosphorylation of UPF1.

It belongs to the DEAD box helicase family. DEAH subfamily. In terms of assembly, forms a complex with RUVBL1 and RUVBL2. Part of a complex composed of SMG1, DHX34 and UPF1; within the complex DHX34 acts as a scaffolding protein to facilitate SMG1 phosphorylation of UPF1. Interacts with UPF1, MOV10, EIF4A3, XRN2, SMG6, SMG7, SMG9, UPF3A, UPF3B, CASC3/MLN51, XRN1, DIS3 and DCP1A; the interactions are RNA-independent. Interacts with NCBP1/CPB80; the interaction is RNA-dependent. Interacts (via C-terminus) with SMG1; the interaction is RNA-independent. Expressed in whole blood, testis and spleen. Also expressed in the brain.

The enzyme catalyses ATP + H2O = ADP + phosphate + H(+). In terms of biological role, probable ATP-binding RNA helicase required for nonsense-mediated decay (NMD) degradation of mRNA transcripts containing premature stop codons. Promotes the phosphorylation of UPF1 along with its interaction with key NMD pathway proteins UPF2 and EIF4A3. Interaction with the RUVBL1-RUVBL2 complex results in loss of nucleotide binding ability and ATP hydrolysis of the complex. Negatively regulates the nucleotide binding ability and ATP hydrolysis of the RUVBL1-RUVBL2 complex via induction of N-terminus conformation changes of the RUVBL2 subunits. The sequence is that of Probable ATP-dependent RNA helicase DHX34 from Homo sapiens (Human).